The following is a 1711-amino-acid chain: Reverse gyrase (1711 aa).

The RG N-terminal-type zinc-finger motif lies at Met1–Ser39. Zn(2+) is bound by residues Cys9, Cys12, Cys27, and Cys30. Residues Gln89 and Ala106–Ser113 each bind ATP. The Helicase ATP-binding domain occupies Val93–Leu256. Residues Asp213–Asp216 carry the DEAD box motif. The interval Asp638–Gly1711 is topoisomerase I. The Toprim domain maps to Ser642–Val805. Glu648 provides a ligand contact to Mg(2+). The RG C-terminal-type zinc-finger motif lies at Leu722–Asp751. Cys725, Cys728, Cys741, and Cys744 together coordinate Zn(2+). A Mg(2+)-binding site is contributed by Asp774. Residues Asn821 to Val1709 enclose the Topo IA-type catalytic domain. In terms of domain architecture, DOD-type homing endonuclease spans Val1160–Ile1287. The O-(5'-phospho-DNA)-tyrosine intermediate role is filled by Tyr1452.

In the N-terminal section; belongs to the DEAD box helicase family. DDVD subfamily. The protein in the C-terminal section; belongs to the type IA topoisomerase family. In terms of assembly, monomer. Zn(2+) is required as a cofactor. Requires Mg(2+) as cofactor. In terms of processing, this protein undergoes a protein self splicing that involves a post-translational excision of the intervening region (intein) followed by peptide ligation.

Its subcellular location is the cytoplasm. The enzyme catalyses ATP + H2O = ADP + phosphate + H(+). In terms of biological role, modifies the topological state of DNA by introducing positive supercoils in an ATP-dependent process, increasing the linking number in steps of +1. Binds to single-stranded DNA, transiently cleaves and then rejoins the ends, introducing a positive supercoil in the process. The scissile phosphodiester is attacked by the catalytic tyrosine of the enzyme, resulting in the formation of a DNA-(5'-phosphotyrosyl)-enzyme intermediate. Probably involved in rewinding DNA strands in regions of the chromosome that have opened up to allow replication, transcription, DNA repair and/or for DNA protection. This is Reverse gyrase from Thermococcus kodakarensis (strain ATCC BAA-918 / JCM 12380 / KOD1) (Pyrococcus kodakaraensis (strain KOD1)).